A 574-amino-acid chain; its full sequence is Golgin subfamily A member 6-like protein 4 (574 aa).

Residues 1–11 (MWPQPRFPPHP) show a composition bias toward pro residues. Disordered stretches follow at residues 1–77 (MWPQ…YGEG) and 491–552 (KELK…AAGG). Positions 51–62 (NGSSPDTATSGG) are enriched in polar residues. Residues 157 to 496 (SKVEQLQDET…EQQVKELKKS (340 aa)) are a coiled coil. Basic and acidic residues predominate over residues 491-504 (KELKKSGGAEEPRG). The segment covering 508–523 (AAAARPVAGAPVPQGA) has biased composition (low complexity).

Belongs to the GOLGA6 family.

In Homo sapiens (Human), this protein is Golgin subfamily A member 6-like protein 4 (GOLGA6L4).